The sequence spans 240 residues: Putative cytochrome c-type biogenesis protein DbsD-like (240 aa).

6 consecutive transmembrane segments (helical) span residues 32–52, 74–94, 104–124, 149–169, 176–196, and 218–238; these read FVFF…ILPI, FFFC…ATLL, GIPV…LNIV, VGIG…LLIW, LFIG…PIII, and APFS…SSIL.

It belongs to the DsbD family.

The protein resides in the plastid. The protein localises to the chloroplast membrane. In terms of biological role, could be involved in cytochrome c synthesis. This is Putative cytochrome c-type biogenesis protein DbsD-like from Porphyra purpurea (Red seaweed).